A 193-amino-acid chain; its full sequence is 3-isopropylmalate dehydratase small subunit (193 aa).

The protein belongs to the LeuD family. LeuD type 1 subfamily. Heterodimer of LeuC and LeuD.

The enzyme catalyses (2R,3S)-3-isopropylmalate = (2S)-2-isopropylmalate. It functions in the pathway amino-acid biosynthesis; L-leucine biosynthesis; L-leucine from 3-methyl-2-oxobutanoate: step 2/4. Catalyzes the isomerization between 2-isopropylmalate and 3-isopropylmalate, via the formation of 2-isopropylmaleate. This is 3-isopropylmalate dehydratase small subunit from Bacillus cereus (strain ATCC 10987 / NRS 248).